The chain runs to 131 residues: Peptide methionine sulfoxide reductase MsrB (131 aa).

The 123-residue stretch at 8 to 130 folds into the MsrB domain; that stretch reads LEEWKQMLDP…NSVCLDLVPR (123 aa). Zn(2+)-binding residues include Cys-47, Cys-50, Cys-96, and Cys-99. The Nucleophile role is filled by Cys-119.

This sequence belongs to the MsrB Met sulfoxide reductase family. Zn(2+) serves as cofactor.

It carries out the reaction L-methionyl-[protein] + [thioredoxin]-disulfide + H2O = L-methionyl-(R)-S-oxide-[protein] + [thioredoxin]-dithiol. The chain is Peptide methionine sulfoxide reductase MsrB from Pseudomonas syringae pv. syringae (strain B728a).